A 615-amino-acid polypeptide reads, in one-letter code: Sodium-dependent dopamine transporter (615 aa).

The segment at 1–39 (MQLVPTDDPDEKIGRTSNGMQNATLPIDGPVNTEPKDPA) is disordered. At 1–46 (MQLVPTDDPDEKIGRTSNGMQNATLPIDGPVNTEPKDPAREQWSGK) the chain is on the cytoplasmic side. A compositionally biased stretch (polar residues) spans 15–24 (RTSNGMQNAT). A helical transmembrane segment spans residues 47–72 (LDFLLSVVGFAVDLGNIWRFPYLCFK). Na(+)-binding residues include Gly55, Ala57, Val58, and Asn62. The Extracellular segment spans residues 73–76 (NGGG). The helical transmembrane segment at 77–100 (VFLIPYSIMVLLTGVPLFYMELCL) threads the bilayer. The Cytoplasmic segment spans residues 101–120 (GQYYRKGAITTWGRICPLFK). The helical transmembrane segment at 121–151 (GIGYCVILTAFYVDFFYNVILAWGLHYLYTS) threads the bilayer. The Extracellular portion of the chain corresponds to 152 to 229 (FSFNLPWASC…IRSVTDLGNV (78 aa)). A disulfide bridge links Cys161 with Cys170. N-linked (GlcNAc...) asparagine glycosylation is found at Asn162 and Asn187. Residues 230–250 (RWDIALSLFVVYLICYFSMWK) traverse the membrane as a helical segment. Residues 251 to 253 (GIH) lie on the Cytoplasmic side of the membrane. The chain crosses the membrane as a helical span at residues 254-278 (TSGKVVWFTALFPYVVLGILFIRGV). The Extracellular portion of the chain corresponds to 279–302 (TLPGWQNGIEYYLRPNFEMLKRPS). Residues 303-328 (VWQDAATQVFFSLGPGFGVLMAYSSY) traverse the membrane as a helical segment. Ser314 provides a ligand contact to Na(+). At 329–334 (NDFHNN) the chain is on the cytoplasmic side. The chain crosses the membrane as a helical span at residues 335 to 358 (VYVDALFTSFINCATSFLSGFVIF). Position 346 (Asn346) interacts with Na(+). Topologically, residues 359 to 398 (SVLGYMSCKSGKPIEAVAQEGPGLVFVVYPEALSTMPYAP) are extracellular. Residues 399 to 424 (FWSVLFFLMLMTLGLDSSFGGSEAII) form a helical membrane-spanning segment. Leu411, Asp414, and Ser415 together coordinate Na(+). At 425–439 (TGLSDEFPILKKNRE) the chain is on the cytoplasmic side. Residues 440 to 460 (VFVGCLFAFYMVIGIAMCTEG) form a helical membrane-spanning segment. A topological domain (extracellular) is located at residue Gly461. A helical transmembrane segment spans residues 462–488 (ILIMEWLIIYGTTWGLLIAVFCEAMVI). At 489–518 (AYIYGLRQFVHDVKEMMGFRPGNYWKFCWS) the chain is on the cytoplasmic side. The helical transmembrane segment at 519-541 (CAAPFILLSMITSNFINYQALTY) threads the bilayer. Residues 542-544 (QDY) are Extracellular-facing. Residues 545–565 (TYPTAANVIGIIFALSGASFI) form a helical membrane-spanning segment. The Cytoplasmic segment spans residues 566 to 615 (PLVGIYKFVNARGNTISEKWQRVTMPYRKRPNQTEYIPIPTTQPHSDIML).

It belongs to the sodium:neurotransmitter symporter (SNF) (TC 2.A.22) family.

The protein localises to the cell membrane. Functionally, dopamine transporter. Terminates the action of dopamine by its high affinity sodium-dependent reuptake into presynaptic terminals. Plays a role in the learned avoidance behavior of animals exposed to food that induces mitochondrial stress. The polypeptide is Sodium-dependent dopamine transporter (Caenorhabditis elegans).